A 216-amino-acid polypeptide reads, in one-letter code: Protein-L-isoaspartate O-methyltransferase (216 aa).

Serine 61 is a catalytic residue.

The protein belongs to the methyltransferase superfamily. L-isoaspartyl/D-aspartyl protein methyltransferase family.

It is found in the cytoplasm. The enzyme catalyses [protein]-L-isoaspartate + S-adenosyl-L-methionine = [protein]-L-isoaspartate alpha-methyl ester + S-adenosyl-L-homocysteine. In terms of biological role, catalyzes the methyl esterification of L-isoaspartyl residues in peptides and proteins that result from spontaneous decomposition of normal L-aspartyl and L-asparaginyl residues. It plays a role in the repair and/or degradation of damaged proteins. The protein is Protein-L-isoaspartate O-methyltransferase (pcm) of Pyrococcus abyssi (strain GE5 / Orsay).